We begin with the raw amino-acid sequence, 2373 residues long: MAPHNSLDDTPLSSRTFIQEPIAVVGIACRLPGHSSTPKKLWDFLERGGIAANDTPSTRFNLAAHHDGSKKPKTMRTPGGMFIEDADPRDFDAGFFGISGADAAAMDPQQRQLMEVVYECLENSGVPFEKLYGAQVACHVGSYAVDYDAIQARDPEDRAPGAVVGIGRAMLSNRISHFFNFKGPSMTIDTACSGSLVGLDVACRYLHTGEVDGAIIGGANMYFSPEHNLNTGAMSVANSLSGRCHTFDVKADGYCKAEAINCVYLKRLSDAVRDGDPIRAVIRGSATNSDGNTPGIASPNSAAQAAAIRSAYANAGITNLNDTSYLEFHGTGTQAGDPLEAGGVASVFSASRKPEAPLYIGSVKSNIGHSEPAAGISGLIKAILSIEKDLIPGNPTFITPTPKIDFEGLKLQPSRANRRWPAAPFKRASVNSFGYGGSNAHVIVEEPKVLLPDMESTYVSSYQTEADLFADDEEVAGGRLQLLVLSANDEASLRANATTLKNYLTNPNVKISLGDLSHTLSERRSHHFHRGYLITDKASIDENALVIGKKSTNEPRVGFIFTGQGAQWPQMGKAIIDTFPEARAVVLELDEFLQSSSLPPSWSLLGELTEPREAEHLRKPEFSQPLVTALQIALFDILQRWGISPRAVAGHSSGEIAAAYAAGLLSKKAAIRAAYYRGQAAALAEKGTADQNQQAFGMMATGIGAEGITPYLQGLGQSVQIACYNSPSSLTLSGTVDALAKVQKQLSEDSIFARMLQVNLAYHSTFMREISQGYTDLLNKDFEHLPFKQDSVRMFSSVTGEQLAGPTDSEYWKSNMVCPVRFDAALSNMLTASDAPDFLIELGPAGALKGPISQVLKSLEGTKAQYTSAMARGAADMQSIFAVAGSLYVAGGKVDLAQVNKVDGIKPKVVIDLPNYSWNHSTKYWYESESSKDWRNRLFPPHDLLGSKVLGSPWRSPAFMRSLNVQDLPWIADHKMGPDTVFPATGYISMAMEAIYQRSEALHMLEGEKKVENPRYRLRDVQFKKALVLPDNQSTRMSLTLSAYTGVGDWFEFKVSSLAGTTWIEHVRGLIRIDEDVPQVASAEEIKPLSHQVDASLWHKCMLDAGYSFGPKFLKQLQIEARPGSRRSRSILGLEVPESKYPQSKYPMHPAAMDGCFQTCAPSLWKGNRHAVNAVLVPAMIDSLTITSSKADRGLSLTSAAYVGLGRPTDNKNYMSNASVYDPETGNLLLRLSGLRYTRIDTGPSVYDAHTFSALISKPDVSLLSSQSLENLAEREQGLNDRSFGVATELVRLAAHKKPAQRVLELNFVPGLSQSIWASAIEGQDNIGKTYRQFVYRLTDPKALVEAGQQYTSEKMEISLLDPEGMTLAEDEFDLVVVRLSPAADNVEHVATQLKKVVKEGGQVLFIRQRSVQNSEVIVNGEAEQFDNGSYADLLKSAGLTFAGHVAFEEGNEFASLSLCRVQPEPDCTGKDVAIYHFVEPSTSALKVITALKARGWNVTTYRAEEASTSPKRFLVLDELDTALLPTLSPAHWDSLKILLSLDKRVLWVTNGSQTVISEPNKAMIHGLGRTVRAEDPLVQLTTLDVSASSTDATVDSVEVILERLALPEVFHHVESEFIERNGLLHINRIQPDDQVNAVASDSYEGSEPVEQSLHDSPNMIRLRCERVGTTDSLIYSEVSPYELPLDDNKVEVEVYAAGLNYKDVVITMGIVPENEHILGLEGAGIVRRLGKNVHKVRKLDIGQRVLVFKKGAFANRVHAEAERVYPIQDSMTFEETCTLASSYLTGIHSLFNLADTKAGSKVLIHSASGGLGLACIQLCQYVGAEVFATCGNKEKRDFLVKHAGIPADHIFNSRDTSFGAAIMAATNGYGVDTILNSLTGDLLDESWRCIAAEGTMVELGKRDMLDRKGLSMEPFGRNASYRCFDMGHDIVSDAMINNLLKRLFALLEAGHVKPVHVATTFGWDNVSGAMRYMRSANHIGKIVISSGDKPIIVPVRPSRAPLQLRGEAGYLLIGGLKGLCGSVAVNLASLGAKHIVVMARSGYDDEVSQRVITDLAALGCTITLGQGDVSKADDVRRVIKQSPVPIGGVIQGAMVLRDRVFTDMSIEEYHAAVDCKVAGTWNIHNALIEENMKVEFFTMLSSVSGVVGQKGQANYAAANAFLDAFAIYRHNLGLAGNSVDLGAIQDVGYMSHHVDLLENLSSDAWTPINEALMLKIVEFSLKQQLTPISKASAGQLITSIAVPQRENSSLLRDARFSTLSFSDGEDVGAGSDGKDAGIQALQLLVKNKAAVSAIHDAVIDVTVRQFTTMLSLSEPMEPAKAPSSYGLDSLAAVEFRNWVRLELKAEVTTLDIISATSLEQLAQKIVARLTAV.

One can recognise a Ketosynthase family 3 (KS3) domain in the interval 19-446; it reads QEPIAVVGIA…GSNAHVIVEE (428 aa). Active-site for beta-ketoacyl synthase activity residues include cysteine 192, histidine 329, and histidine 369. The tract at residues 560-874 is malonyl-CoA:ACP transacylase (MAT) domain; that stretch reads IFTGQGAQWP…QYTSAMARGA (315 aa). Serine 652 functions as the For malonyltransferase activity in the catalytic mechanism. The tract at residues 942–1078 is N-terminal hotdog fold; it reads HDLLGSKVLG…GLIRIDEDVP (137 aa). The dehydratase (DH) domain stretch occupies residues 942–1241; that stretch reads HDLLGSKVLG…LSGLRYTRID (300 aa). Positions 942–1246 constitute a PKS/mFAS DH domain; that stretch reads HDLLGSKVLG…YTRIDTGPSV (305 aa). Histidine 974 functions as the Proton acceptor; for dehydratase activity in the catalytic mechanism. Residues 1090–1246 are C-terminal hotdog fold; sequence SHQVDASLWH…YTRIDTGPSV (157 aa). The active-site Proton donor; for dehydratase activity is aspartate 1154. The tract at residues 1669–1985 is enoyl reductase (ER) domain; the sequence is GTTDSLIYSE…SANHIGKIVI (317 aa). The tract at residues 2010 to 2187 is ketoreductase (KR) domain; sequence GYLLIGGLKG…NSVDLGAIQD (178 aa). The 77-residue stretch at 2294–2370 folds into the Carrier domain; the sequence is AIHDAVIDVT…QLAQKIVARL (77 aa). O-(pantetheine 4'-phosphoryl)serine is present on serine 2330.

It depends on pantetheine 4'-phosphate as a cofactor.

The protein operates within mycotoxin biosynthesis. Functionally, highly reducing polyketide synthase; part of the gene cluster that mediates the biosynthesis of brefeldin A (BFA), a protein transport inhibitor that shows antiviral, antifungal, and antitumor properties. The proposed biosynthesis of BFA involves formation of an acyclic polyketide chain that is differentially tailored throughout the backbone. The highly reducing polyketide synthase Bref-PKS is proposed to synthesize the precisely reduced octaketide precursor, which could then be directly offloaded by the thiohydrolase enzyme Bref-TH followed by a cytochrome P450 monooxygenase-mediated formation of the cyclopentane ring and macrocyclization to afford 7-deoxy BFA. Alternatively, the first ring annulation can also occur on the ACP-tethered intermediate before the thiohydrolase release and lactonization. The C7-hydroxylation by another cytochrome P450 monooxygenase is believed to be the final step in the process to obtain the final structure of BFA. In addition to the HRPKS Bref-PKS and the thiohydrolase Bref-TH, the brefeldin A biosynthesis cluster contains 4 cytochrome p450 monooxygenases (called orf3 to orf6), as well a the probable cluster-specific transcription regulator orf8. This Eupenicillium brefeldianum (Penicillium brefeldianum) protein is Highly reducing polyketide synthase.